Consider the following 274-residue polypeptide: MAIVKCKPTSPGRRHVVKVVNADLHKGKPYAPLLEKNSKNGGRNNNGRITVRHIGGGHKHHYRLVDFKRTKDGIPAKVERLEYDPNRSANIALVLYADGERRYIIAPKGVNAGDQIQSGVDAAIKAGNTLPMRNIPVGSTVHCVELKPGKGAQLARSAGAYAQIIARDGAYVTIRLRSGEMRKVLSEGRATIGEVGNSEHMLRELGKAGASRWRGVRPTVRGVVMNPVDHPHGGGEGRTSGGRHPVSPWGVPTKGFKTRKNKRTDKYIVRRRTK.

The tract at residues 223 to 274 (VVMNPVDHPHGGGEGRTSGGRHPVSPWGVPTKGFKTRKNKRTDKYIVRRRTK) is disordered. The segment covering 256–274 (FKTRKNKRTDKYIVRRRTK) has biased composition (basic residues).

The protein belongs to the universal ribosomal protein uL2 family. As to quaternary structure, part of the 50S ribosomal subunit. Forms a bridge to the 30S subunit in the 70S ribosome.

Functionally, one of the primary rRNA binding proteins. Required for association of the 30S and 50S subunits to form the 70S ribosome, for tRNA binding and peptide bond formation. It has been suggested to have peptidyltransferase activity; this is somewhat controversial. Makes several contacts with the 16S rRNA in the 70S ribosome. The chain is Large ribosomal subunit protein uL2 from Vibrio atlanticus (strain LGP32) (Vibrio splendidus (strain Mel32)).